Here is a 237-residue protein sequence, read N- to C-terminus: NAD-dependent protein deacylase (237 aa).

Residues 1-235 (MRVAVLSGAG…PGLLERLPAL (235 aa)) enclose the Deacetylase sirtuin-type domain. 8–28 (GAGISAESGVPTFRDDKNGLW) provides a ligand contact to NAD(+). Substrate-binding residues include Tyr53 and Arg56. An NAD(+)-binding site is contributed by 86–89 (QNVD). His104 functions as the Proton acceptor in the catalytic mechanism. Cys112, Cys115, Cys138, and Cys140 together coordinate Zn(2+). Residues 177–179 (GTS), 203–205 (NPE), and Ala221 each bind NAD(+).

Belongs to the sirtuin family. Class III subfamily. Zn(2+) is required as a cofactor.

The protein resides in the cytoplasm. It carries out the reaction N(6)-acetyl-L-lysyl-[protein] + NAD(+) + H2O = 2''-O-acetyl-ADP-D-ribose + nicotinamide + L-lysyl-[protein]. It catalyses the reaction N(6)-succinyl-L-lysyl-[protein] + NAD(+) + H2O = 2''-O-succinyl-ADP-D-ribose + nicotinamide + L-lysyl-[protein]. Functionally, NAD-dependent lysine deacetylase and desuccinylase that specifically removes acetyl and succinyl groups on target proteins. Modulates the activities of several proteins which are inactive in their acylated form. This chain is NAD-dependent protein deacylase, found in Mycobacterium bovis (strain ATCC BAA-935 / AF2122/97).